A 325-amino-acid chain; its full sequence is D-alanine--D-alanine ligase (325 aa).

Residues Lys-109–Glu-309 enclose the ATP-grasp domain. ATP is bound at residue Cys-136 to Glu-191. Positions 262, 276, and 278 each coordinate Mg(2+).

This sequence belongs to the D-alanine--D-alanine ligase family. It depends on Mg(2+) as a cofactor. Mn(2+) is required as a cofactor.

The protein localises to the cytoplasm. It carries out the reaction 2 D-alanine + ATP = D-alanyl-D-alanine + ADP + phosphate + H(+). The protein operates within cell wall biogenesis; peptidoglycan biosynthesis. Cell wall formation. This is D-alanine--D-alanine ligase from Solibacter usitatus (strain Ellin6076).